Consider the following 620-residue polypeptide: mRNA cap guanine-N(7) methyltransferase (620 aa).

Disordered regions lie at residues 1–176 (MLPP…APSS) and 193–304 (AHAN…DDEY). Residues 29-44 (RSPSMSLSPRSQNQSL) are compositionally biased toward polar residues. 2 stretches are compositionally biased toward low complexity: residues 45 to 60 (PYPS…SAHP) and 136 to 157 (PQPT…TPHH). The region spanning 345 to 620 (SPIIGLKKFN…LYMGFAFEKM (276 aa)) is the mRNA cap 0 methyltransferase domain. An mRNA-binding site is contributed by 354–355 (NN). Residues K358, G377, D399, D428, Q454, and Y459 each coordinate S-adenosyl-L-methionine.

Belongs to the class I-like SAM-binding methyltransferase superfamily. mRNA cap 0 methyltransferase family.

The protein localises to the nucleus. It carries out the reaction a 5'-end (5'-triphosphoguanosine)-ribonucleoside in mRNA + S-adenosyl-L-methionine = a 5'-end (N(7)-methyl 5'-triphosphoguanosine)-ribonucleoside in mRNA + S-adenosyl-L-homocysteine. In terms of biological role, responsible for methylating the 5'-cap structure of mRNAs. In Cryptococcus neoformans var. neoformans serotype D (strain JEC21 / ATCC MYA-565) (Filobasidiella neoformans), this protein is mRNA cap guanine-N(7) methyltransferase (ABD1).